Consider the following 335-residue polypeptide: Ketol-acid reductoisomerase (NADP(+)) (335 aa).

The KARI N-terminal Rossmann domain maps to 5-185 (SKIYTDKDSN…GATRAGVIPT (181 aa)). Residues 28–31 (YGSQ), Ser-56, and 86–89 (DMVQ) contribute to the NADP(+) site. His-111 is an active-site residue. Position 137 (Gly-137) interacts with NADP(+). Positions 186–331 (TFKEETETDL…NQLKDLIQKG (146 aa)) constitute a KARI C-terminal knotted domain. The Mg(2+) site is built by Asp-194, Glu-198, Glu-230, and Glu-234. Ser-255 is a substrate binding site.

Belongs to the ketol-acid reductoisomerase family. Requires Mg(2+) as cofactor.

It catalyses the reaction (2R)-2,3-dihydroxy-3-methylbutanoate + NADP(+) = (2S)-2-acetolactate + NADPH + H(+). The enzyme catalyses (2R,3R)-2,3-dihydroxy-3-methylpentanoate + NADP(+) = (S)-2-ethyl-2-hydroxy-3-oxobutanoate + NADPH + H(+). Its pathway is amino-acid biosynthesis; L-isoleucine biosynthesis; L-isoleucine from 2-oxobutanoate: step 2/4. It functions in the pathway amino-acid biosynthesis; L-valine biosynthesis; L-valine from pyruvate: step 2/4. Involved in the biosynthesis of branched-chain amino acids (BCAA). Catalyzes an alkyl-migration followed by a ketol-acid reduction of (S)-2-acetolactate (S2AL) to yield (R)-2,3-dihydroxy-isovalerate. In the isomerase reaction, S2AL is rearranged via a Mg-dependent methyl migration to produce 3-hydroxy-3-methyl-2-ketobutyrate (HMKB). In the reductase reaction, this 2-ketoacid undergoes a metal-dependent reduction by NADPH to yield (R)-2,3-dihydroxy-isovalerate. The polypeptide is Ketol-acid reductoisomerase (NADP(+)) (Saccharolobus islandicus (strain L.S.2.15 / Lassen #1) (Sulfolobus islandicus)).